An 860-amino-acid chain; its full sequence is Valine--tRNA ligase (860 aa).

The 'HIGH' region motif lies at 43–53 (PTVSGALHVGH). The tract at residues 469–491 (LPVDPSSDAPTGYQESQRNQPGG) is disordered. The 'KMSKS' region signature appears at 574–578 (KMSKS). Residue K577 participates in ATP binding.

This sequence belongs to the class-I aminoacyl-tRNA synthetase family. ValS type 2 subfamily. As to quaternary structure, monomer.

It localises to the cytoplasm. The catalysed reaction is tRNA(Val) + L-valine + ATP = L-valyl-tRNA(Val) + AMP + diphosphate. In terms of biological role, catalyzes the attachment of valine to tRNA(Val). As ValRS can inadvertently accommodate and process structurally similar amino acids such as threonine, to avoid such errors, it has a 'posttransfer' editing activity that hydrolyzes mischarged Thr-tRNA(Val) in a tRNA-dependent manner. In Salinispora tropica (strain ATCC BAA-916 / DSM 44818 / JCM 13857 / NBRC 105044 / CNB-440), this protein is Valine--tRNA ligase.